The primary structure comprises 404 residues: F-box protein At2g17036 (404 aa).

The F-box domain occupies 2-50 (MDWATLPKDLLDLISKCLESSFDLIQFRSVCSSWRSAAGPKRLLWAHNL).

The sequence is that of F-box protein At2g17036 from Arabidopsis thaliana (Mouse-ear cress).